Here is a 101-residue protein sequence, read N- to C-terminus: Small ribosomal subunit protein uS14 (101 aa).

Belongs to the universal ribosomal protein uS14 family. Part of the 30S ribosomal subunit. Contacts proteins S3 and S10.

Its function is as follows. Binds 16S rRNA, required for the assembly of 30S particles and may also be responsible for determining the conformation of the 16S rRNA at the A site. The polypeptide is Small ribosomal subunit protein uS14 (Ralstonia pickettii (strain 12J)).